The following is a 189-amino-acid chain: Cancer/testis antigen family 45 member A3 (189 aa).

The interval 81–119 (KDRMMQKPGSNAPVGGNVTSSFSGDDLECRETASSPKSQ) is disordered.

It belongs to the CT45 family. As to expression, testis specific. Expressed in cancer cell lines.

The protein resides in the nucleus. This chain is Cancer/testis antigen family 45 member A3, found in Homo sapiens (Human).